The chain runs to 126 residues: Large ribosomal subunit protein uL14m (126 aa).

Belongs to the universal ribosomal protein uL14 family. As to quaternary structure, component of the mitochondrial large ribosomal subunit (mt-LSU). Mature yeast 74S mitochondrial ribosomes consist of a small (37S) and a large (54S) subunit. The 37S small subunit contains a 15S ribosomal RNA (15S mt-rRNA) and at least 32 different proteins. The 54S large subunit contains a 21S rRNA (21S mt-rRNA) and at least 45 different proteins.

Its subcellular location is the mitochondrion. In terms of biological role, component of the mitochondrial ribosome (mitoribosome), a dedicated translation machinery responsible for the synthesis of mitochondrial genome-encoded proteins, including at least some of the essential transmembrane subunits of the mitochondrial respiratory chain. The mitoribosomes are attached to the mitochondrial inner membrane and translation products are cotranslationally integrated into the membrane. This Schizosaccharomyces pombe (strain 972 / ATCC 24843) (Fission yeast) protein is Large ribosomal subunit protein uL14m (mrpl38).